A 122-amino-acid polypeptide reads, in one-letter code: Phosphoribosyl-ATP pyrophosphatase (122 aa).

The protein belongs to the PRA-PH family.

The protein resides in the cytoplasm. It catalyses the reaction 1-(5-phospho-beta-D-ribosyl)-ATP + H2O = 1-(5-phospho-beta-D-ribosyl)-5'-AMP + diphosphate + H(+). The protein operates within amino-acid biosynthesis; L-histidine biosynthesis; L-histidine from 5-phospho-alpha-D-ribose 1-diphosphate: step 2/9. This Burkholderia mallei (strain NCTC 10247) protein is Phosphoribosyl-ATP pyrophosphatase.